We begin with the raw amino-acid sequence, 439 residues long: Enolase (439 aa).

Gln-163 contributes to the (2R)-2-phosphoglycerate binding site. Glu-205 serves as the catalytic Proton donor. Mg(2+)-binding residues include Asp-242, Glu-287, and Asp-314. Positions 339, 368, 369, and 390 each coordinate (2R)-2-phosphoglycerate. The active-site Proton acceptor is Lys-339.

Belongs to the enolase family. The cofactor is Mg(2+).

Its subcellular location is the cytoplasm. The protein localises to the secreted. It is found in the cell surface. It catalyses the reaction (2R)-2-phosphoglycerate = phosphoenolpyruvate + H2O. Its pathway is carbohydrate degradation; glycolysis; pyruvate from D-glyceraldehyde 3-phosphate: step 4/5. In terms of biological role, catalyzes the reversible conversion of 2-phosphoglycerate (2-PG) into phosphoenolpyruvate (PEP). It is essential for the degradation of carbohydrates via glycolysis. In Levilactobacillus brevis (strain ATCC 367 / BCRC 12310 / CIP 105137 / JCM 1170 / LMG 11437 / NCIMB 947 / NCTC 947) (Lactobacillus brevis), this protein is Enolase.